A 404-amino-acid chain; its full sequence is Mevalonate kinase (404 aa).

ATP is bound by residues lysine 12, serine 130, and 135–141 (GAGLGSS). Positions 141 and 184 each coordinate Mg(2+). The active-site Proton acceptor is the aspartate 195.

The protein belongs to the GHMP kinase family. Mevalonate kinase subfamily. In terms of assembly, homodimer. It depends on Mg(2+) as a cofactor.

The protein localises to the cytoplasm. Its subcellular location is the nucleus. It catalyses the reaction (R)-mevalonate + ATP = (R)-5-phosphomevalonate + ADP + H(+). It functions in the pathway isoprenoid biosynthesis; isopentenyl diphosphate biosynthesis via mevalonate pathway; isopentenyl diphosphate from (R)-mevalonate: step 1/3. Its activity is regulated as follows. Farnesyl pyrophosphate and geranyl pyrophosphate inhibit mevalonate kinase by binding competitively at the ATP-binding site. In terms of biological role, mevalonate kinase; part of the second module of ergosterol biosynthesis pathway that includes the middle steps of the pathway. Erg12 converts mevalonate into 5-phosphomevalonate. The second module is carried out in the vacuole and involves the formation of farnesyl diphosphate, which is also an important intermediate in the biosynthesis of ubiquinone, dolichol, heme and prenylated proteins. Activity by the mevalonate kinase erg12 first converts mevalonate into 5-phosphomevalonate. 5-phosphomevalonate is then further converted to 5-diphosphomevalonate by the phosphomevalonate kinase erg8. The diphosphomevalonate decarboxylase mvd1 then produces isopentenyl diphosphate. The isopentenyl-diphosphate delta-isomerase idi1 then catalyzes the 1,3-allylic rearrangement of the homoallylic substrate isopentenyl (IPP) to its highly electrophilic allylic isomer, dimethylallyl diphosphate (DMAPP). Finally the farnesyl diphosphate synthase fps1 catalyzes the sequential condensation of isopentenyl pyrophosphate with dimethylallyl pyrophosphate, and then with the resultant geranylpyrophosphate to the ultimate product farnesyl pyrophosphate. This is Mevalonate kinase (erg12) from Schizosaccharomyces pombe (strain 972 / ATCC 24843) (Fission yeast).